A 559-amino-acid polypeptide reads, in one-letter code: Dihydroxy-acid dehydratase (559 aa).

Cys56 is a binding site for [2Fe-2S] cluster. Asp88 serves as a coordination point for Mg(2+). Cys129 contributes to the [2Fe-2S] cluster binding site. Mg(2+) is bound by residues Asp130 and Lys131. At Lys131 the chain carries N6-carboxylysine. Cys198 is a [2Fe-2S] cluster binding site. Mg(2+) is bound at residue Glu449. Catalysis depends on Ser475, which acts as the Proton acceptor.

Belongs to the IlvD/Edd family. In terms of assembly, homodimer. Requires [2Fe-2S] cluster as cofactor. Mg(2+) serves as cofactor.

It catalyses the reaction (2R)-2,3-dihydroxy-3-methylbutanoate = 3-methyl-2-oxobutanoate + H2O. The catalysed reaction is (2R,3R)-2,3-dihydroxy-3-methylpentanoate = (S)-3-methyl-2-oxopentanoate + H2O. Its pathway is amino-acid biosynthesis; L-isoleucine biosynthesis; L-isoleucine from 2-oxobutanoate: step 3/4. It participates in amino-acid biosynthesis; L-valine biosynthesis; L-valine from pyruvate: step 3/4. Functions in the biosynthesis of branched-chain amino acids. Catalyzes the dehydration of (2R,3R)-2,3-dihydroxy-3-methylpentanoate (2,3-dihydroxy-3-methylvalerate) into 2-oxo-3-methylpentanoate (2-oxo-3-methylvalerate) and of (2R)-2,3-dihydroxy-3-methylbutanoate (2,3-dihydroxyisovalerate) into 2-oxo-3-methylbutanoate (2-oxoisovalerate), the penultimate precursor to L-isoleucine and L-valine, respectively. In Ruthia magnifica subsp. Calyptogena magnifica, this protein is Dihydroxy-acid dehydratase.